A 116-amino-acid chain; its full sequence is uncharacterized protein (116 aa).

This is an uncharacterized protein from Archaeoglobus fulgidus (strain ATCC 49558 / DSM 4304 / JCM 9628 / NBRC 100126 / VC-16).